The primary structure comprises 460 residues: MKVGILDSTLREGEQTPGVVFTIDQRVEIAKALSDVGVQMIEAGHPAVSSDIYEGIKRIMKLKREGLITSEIVGHSRAVKKDIEVAAELEVDRIAIFYGVSDIHLKAKHHVTREEALNIIAETISYAKSHGVKVRFTAEDGSRTDLDYLIKVCKTARDAGADRVSIADTVGILYPTKTRELFSTLVREVPGLEFDIHAHNDLGLAVANALAAIEGGATIIHTTVNGLGERVGIVPLQVIAAAIKYHFGIEVVKLNKLQQLASLVEKYSGIPMPPNYPITGDYAFIHKAGIHVAGVLNDPSTYEFMPPETFGRSRDYVIDKYTGKHALKDRFEKLGVKLSDVELDQVLAKIKSNPNVRFYRDVDLLEIAESVTGRVLKPKPPENIEALISVKCESNVYTTAVTRRLSVIPGVKEVMEISGDYDILVKVEAKDPNELNQIIENIRAVKGVSSTLTSLVLKKM.

Positions 3–258 constitute a Pyruvate carboxyltransferase domain; the sequence is VGILDSTLRE…IEVVKLNKLQ (256 aa). R11 contributes to the 2-oxoglutarate binding site. E12 contributes to the Mg(2+) binding site. 2-oxoglutarate contacts are provided by H75, R135, and T169. 2 residues coordinate Mg(2+): H197 and H199. Residue H291 is the Proton acceptor of the active site.

The protein belongs to the alpha-IPM synthase/homocitrate synthase family. Homocitrate synthase LYS20/LYS21 subfamily. As to quaternary structure, forms a homotetramer in the absence of lysine, and is in hexadecamer-octamer equilibrium in the presence of lysine. Mg(2+) serves as cofactor. The cofactor is Mn(2+).

The enzyme catalyses acetyl-CoA + 2-oxoglutarate + H2O = (2R)-homocitrate + CoA + H(+). It participates in amino-acid biosynthesis; L-lysine biosynthesis via AAA pathway; L-alpha-aminoadipate from 2-oxoglutarate: step 1/5. With respect to regulation, inhibited by lysine. Its function is as follows. Catalyzes the aldol-type condensation of 2-oxoglutarate with acetyl-CoA to yield homocitrate. Carries out the first step of the alpha-aminoadipate (AAA) lysine biosynthesis pathway. In Sulfurisphaera tokodaii (strain DSM 16993 / JCM 10545 / NBRC 100140 / 7) (Sulfolobus tokodaii), this protein is Homocitrate synthase.